The chain runs to 266 residues: MVCLKLPGGSCMTALTVTLMVLSSPLALSGDTRPRFLWQPKRECHFFNGTERVRFLDRYFYNQEESVRFDSDVGEFRAVTELGRPDAEYWNSQKDILEQARAAVDTYCRHNYGVVESFTVQRRVQPKVTVYPSKTQPLQHHNLLVCSVSGFYPGSIEVRWFLNGQEEKAGMVSTGLIQNGDWTFQTLVMLETVPRSGEVYTCQVEHPSVTSPLTVEWRARSESAQSKMLSGVGGFVLGLLFLGAGLFIYFRNQKGHSGLQPTGFLS.

The signal sequence occupies residues 1 to 29; sequence MVCLKLPGGSCMTALTVTLMVLSSPLALS. A beta-1 region spans residues 30–124; the sequence is GDTRPRFLWQ…VESFTVQRRV (95 aa). Over 30-227 the chain is Extracellular; sequence GDTRPRFLWQ…RARSESAQSK (198 aa). An intrachain disulfide couples cysteine 44 to cysteine 108. Asparagine 48 carries N-linked (GlcNAc...) asparagine glycosylation. Residues aspartate 86, tryptophan 90, histidine 110, asparagine 111, and arginine 122 each coordinate a peptide antigen. The interval 125–227 is beta-2; it reads QPKVTVYPSK…RARSESAQSK (103 aa). One can recognise an Ig-like C1-type domain in the interval 126–214; it reads PKVTVYPSKT…EHPSVTSPLT (89 aa). Residues cysteine 146 and cysteine 202 are joined by a disulfide bond. The helical transmembrane segment at 228–248 threads the bilayer; sequence MLSGVGGFVLGLLFLGAGLFI. Over 249-266 the chain is Cytoplasmic; it reads YFRNQKGHSGLQPTGFLS. Residue lysine 254 forms a Glycyl lysine isopeptide (Lys-Gly) (interchain with G-Cter in ubiquitin) linkage.

Heterotrimer that consists of an alpha chain HLA-DRA, a beta chain HLA-DRB1 and a peptide (peptide-MHCII). Newly synthesized alpha and beta chains forms a heterodimer (MHCII) that associates with the CD74/invariant chain (Ii) in the endoplasmic reticulum (ER). Ii is a trimer composed of three subunits and each subunit interacts with one MHCII dimer, blocking the peptide-binding cleft. As a result, MHCII molecules cannot bind peptides present in the ER. The complex of MHCII and CD74/Ii is transported in vesicles from ER to Golgi to lysosomes, where it encounters antigenic peptides generated via proteolysis of endocytosed antigens. MHCII dimers are dissociated from CD74/Ii by the combined action of proteolysis and HLA-DM. Lysosomal enzymes such as cathepsin, degrade CD74/Ii leaving a 24 amino acid remnant called class II-associated Ii or CLIP. Interacts (via the peptide binding cleft) with CLIP; this interaction inhibits antigen peptide binding before entry in the endosomal compartment. The displacement of CLIP and replacement by a high affinity peptide in lysosomes is performed by HLA-DM heterodimer. HLA-DM catalyzes CLIP dissociation from MHCII, stabilizes empty MHCII and mediates the selection of high affinity peptides. Interacts with HLA-DM heterodimer; this interaction is direct. Interacts with TCR (via CDR3). Interacts (via beta-2 domain) with CD4 coreceptor (via Ig-like V-type domain); this interaction is of exceptionally low affinity yet necessary for optimal recognition of antigenic peptides. In terms of assembly, (Microbial infection) Interacts with Staphylococcus aureus enterotoxin A/entA, enterotoxin B/entB, enterotoxin C1/entC1, enterotoxin D/entD and enterotoxin H/entH. Enterotoxins bind outside the peptide-binding cleft of MHCII: enterotoxin H/entH interacts via the beta-1 domain of MHCII and in a zinc-dependent way, whereas enterotoxin B/entB interacts primarily via the alpha-1 domain. As to quaternary structure, (Microbial infection) Interacts with Epstein-Barr virus gp42 protein. Post-translationally, ubiquitinated by MARCHF1 and MARCHF8 at Lys-254 leading to sorting into the endosome system and down-regulation of MHCII. Expressed in professional APCs: monocyte/macrophages, dendritic cells and B cells (at protein level). Expressed in thymic epithelial cells (at protein level).

The protein resides in the cell membrane. It localises to the endoplasmic reticulum membrane. The protein localises to the lysosome membrane. Its subcellular location is the late endosome membrane. It is found in the autolysosome membrane. In terms of biological role, a beta chain of antigen-presenting major histocompatibility complex class II (MHCII) molecule. In complex with the alpha chain HLA-DRA, displays antigenic peptides on professional antigen presenting cells (APCs) for recognition by alpha-beta T cell receptor (TCR) on HLA-DRB1-restricted CD4-positive T cells. This guides antigen-specific T-helper effector functions, both antibody-mediated immune response and macrophage activation, to ultimately eliminate the infectious agents and transformed cells. Typically presents extracellular peptide antigens of 10 to 30 amino acids that arise from proteolysis of endocytosed antigens in lysosomes. In the tumor microenvironment, presents antigenic peptides that are primarily generated in tumor-resident APCs likely via phagocytosis of apoptotic tumor cells or macropinocytosis of secreted tumor proteins. Presents peptides derived from intracellular proteins that are trapped in autolysosomes after macroautophagy, a mechanism especially relevant for T cell selection in the thymus and central immune tolerance. The selection of the immunodominant epitopes follows two processing modes: 'bind first, cut/trim later' for pathogen-derived antigenic peptides and 'cut first, bind later' for autoantigens/self-peptides. The anchor residue at position 1 of the peptide N-terminus, usually a large hydrophobic residue, is essential for high affinity interaction with MHCII molecules. Its function is as follows. Allele DRB1*01:01: Displays an immunodominant epitope derived from Bacillus anthracis pagA/protective antigen, PA (KLPLYISNPNYKVNVYAVT), to both naive and PA-specific memory CD4-positive T cells. Presents immunodominant HIV-1 gag peptide (FRDYVDRFYKTLRAEQASQE) on infected dendritic cells for recognition by TRAV24-TRBV2 TCR on CD4-positive T cells and controls viral load. May present to T-helper 1 cells several HRV-16 epitopes derived from capsid proteins VP1 (PRFSLPFLSIASAYYMFYDG) and VP2 (PHQFINLRSNNSATLIVPYV), contributing to viral clearance. Displays commonly recognized peptides derived from IAV external protein HA (PKYVKQNTLKLAT and SNGNFIAPEYAYKIVK) and from internal proteins M, NP and PB1, with M-derived epitope (GLIYNRMGAVTTEV) being the most immunogenic. Presents a self-peptide derived from COL4A3 (GWISLWKGFSF) to TCR (TRAV14 biased) on CD4-positive, FOXP3-positive regulatory T cells and mediates immune tolerance to self. May present peptides derived from oncofetal trophoblast glycoprotein TPBG 5T4, known to be recognized by both T-helper 1 and regulatory T cells. Displays with low affinity a self-peptide derived from MBP (VHFFKNIVTPRTP). Functionally, allele DRB1*03:01: May present to T-helper 1 cells an HRV-16 epitope derived from capsid protein VP2 (NEKQPSDDNWLNFDGTLLGN), contributing to viral clearance. Displays self-peptides derived from retinal SAG (NRERRGIALDGKIKHE) and thyroid TG (LSSVVVDPSIRHFDV). Presents viral epitopes derived from HHV-6B gH/U48 and U85 antigens to polyfunctional CD4-positive T cells with cytotoxic activity implicated in control of HHV-6B infection. Presents several immunogenic epitopes derived from C.tetani neurotoxin tetX, playing a role in immune recognition and long-term protection. Allele DRB1*04:01: Presents an immunodominant bacterial epitope derived from M.tuberculosis esxB/culture filtrate antigen CFP-10 (EISTNIRQAGVQYSR), eliciting CD4-positive T cell effector functions such as IFNG production and cytotoxic activity. May present to T-helper 1 cells an HRV-16 epitope derived from capsid protein VP2 (NEKQPSDDNWLNFDGTLLGN), contributing to viral clearance. Presents tumor epitopes derived from melanoma-associated TYR antigen (QNILLSNAPLGPQFP and DYSYLQDSDPDSFQD), triggering CD4-positive T cell effector functions such as GMCSF production. Displays preferentially citrullinated self-peptides derived from VIM (GVYATR/citSSAVR and SAVRAR/citSSVPGVR) and ACAN (VVLLVATEGR/ CitVRVNSAYQDK). Displays self-peptides derived from COL2A1. In terms of biological role, allele DRB1*04:02: Displays native or citrullinated self-peptides derived from VIM. Its function is as follows. Allele DRB1*04:04: May present to T-helper 1 cells several HRV-16 epitopes derived from capsid proteins VP1 (HIVMQYMYVPPGAPIPTTRN) and VP2 (RGDSTITSQDVANAVVGYGV), contributing to viral clearance. Displays preferentially citrullinated self-peptides derived from VIM (SAVRAR/citSSVPGVR). Functionally, allele DRB1*04:05: May present to T-helper 1 cells an immunogenic epitope derived from tumor-associated antigen WT1 (KRYFKLSHLQMHSRKH), likely providing for effective antitumor immunity in a wide range of solid and hematological malignancies. Allele DRB1*05:01: Presents an immunodominant HIV-1 gag peptide (FRDYVDRFYKTLRAEQASQE) on infected dendritic cells for recognition by TRAV24-TRBV2 TCR on CD4-positive T cells and controls viral load. In terms of biological role, allele DRB1*07:01: Upon EBV infection, presents latent antigen EBNA2 peptide (PRSPTVFYNIPPMPLPPSQL) to CD4-positive T cells, driving oligoclonal expansion and selection of a dominant virus-specific memory T cell subset with cytotoxic potential to directly eliminate virus-infected B cells. May present to T-helper 1 cells several HRV-16 epitopes derived from capsid proteins VP1 (PRFSLPFLSIASAYYMFYDG) and VP2 (VPYVNAVPMDSMVRHNNWSL), contributing to viral clearance. In the context of tumor immunesurveillance, may present to T-helper 1 cells an immunogenic epitope derived from tumor-associated antigen WT1 (MTEYKLVVVGAVGVGKSALTIQLI), likely providing for effective antitumor immunity in a wide range of solid and hematological malignancies. In metastatic epithelial tumors, presents to intratumoral CD4-positive T cells a KRAS neoantigen (MTEYKLVVVGAVGVGKSALTIQLI) carrying G12V hotspot driver mutation and may mediate tumor regression. Its function is as follows. Allele DRB1*11:01: Displays an immunodominant HIV-1 gag peptide (FRDYVDRFYKTLRAEQASQE) on infected dendritic cells for recognition by TRAV24-TRBV2 TCR on CD4-positive T cells and controls viral load. May present to T-helper 1 cells an HRV-16 epitope derived from capsid protein VP2 (SDRIIQITRGDSTITSQDVA), contributing to viral clearance. Presents several immunogenic epitopes derived from C.tetani neurotoxin tetX, playing a role in immune recognition and longterm protection. In the context of tumor immunesurveillance, may present tumor-derived neoantigens to CD4-positive T cells and trigger anti-tumor helper functions. Functionally, allele DRB1*13:01: Presents viral epitopes derived from HHV-6B antigens to polyfunctional CD4-positive T cells implicated in control of HHV-6B infection. Allele DRB1*15:01: May present to T-helper 1 cells an HRV-16 epitope derived from capsid protein VP2 (SNNSATLIVPYVNAVPMDSM), contributing to viral clearance. Displays a self-peptide derived from MBP (ENPVVHFFKNIVTPR). May present to T-helper 1 cells an immunogenic epitope derived from tumor-associated antigen WT1 (KRYFKLSHLQMHSRKH), likely providing for effective antitumor immunity in a wide range of solid and hematological malignancies. In terms of biological role, allele DRB1*15:02: Displays an immunodominant HIV-1 gag peptide (FRDYVDRFYKTLRAEQASQE) on infected dendritic cells for recognition by TRAV24-TRBV2 TCR on CD4-positive T cells and controls viral load. May present to T-helper 1 cells an immunogenic epitope derived from tumor-associated antigen WT1 (KRYFKLSHLQMHSRKH), likely providing for effective antitumor immunity in a wide range of solid and hematological malignancies. Its function is as follows. (Microbial infection) Acts as a receptor for Epstein-Barr virus on lymphocytes. This is HLA class II histocompatibility antigen, DRB1 beta chain from Homo sapiens (Human).